The chain runs to 410 residues: Pyruvate dehydrogenase complex protein X component, mitochondrial (410 aa).

Residues 1–30 constitute a mitochondrion transit peptide; the sequence is MLSAISKVSTLKSCTRYLTKCNYHASAKLL. The 77-residue stretch at 32–108 folds into the Lipoyl-binding domain; the sequence is VKTFSMPAMS…DVGEPIAYIA (77 aa). An N6-lipoyllysine modification is found at lysine 73. In terms of domain architecture, Peripheral subunit-binding (PSBD) spans 169-210; it reads TLLPSVSLLLAENNISKQKALKEIAPSGSNGRLLKGDVLAYL.

It belongs to the 2-oxoacid dehydrogenase family. As to quaternary structure, eukaryotic pyruvate dehydrogenase (PDH) complexes are organized as a core consisting of the oligomeric dihydrolipoamide acetyl-transferase (E2), around which are arranged multiple copies of pyruvate dehydrogenase (E1), dihydrolipoamide dehydrogenase (E3) and protein X (E3BP) bound by non-covalent bonds.

The protein resides in the mitochondrion matrix. In terms of biological role, required for anchoring dihydrolipoamide dehydrogenase (E3) to the dihydrolipoamide transacetylase (E2) core of the pyruvate dehydrogenase complexes of eukaryotes. This specific binding is essential for a functional PDH complex. In Saccharomyces cerevisiae (strain ATCC 204508 / S288c) (Baker's yeast), this protein is Pyruvate dehydrogenase complex protein X component, mitochondrial (PDX1).